The sequence spans 122 residues: Small ribosomal subunit protein uS13 (122 aa).

The segment covering Gly-95–Thr-116 has biased composition (basic residues). Residues Gly-95–Lys-122 form a disordered region.

It belongs to the universal ribosomal protein uS13 family. As to quaternary structure, part of the 30S ribosomal subunit. Forms a loose heterodimer with protein S19. Forms two bridges to the 50S subunit in the 70S ribosome.

In terms of biological role, located at the top of the head of the 30S subunit, it contacts several helices of the 16S rRNA. In the 70S ribosome it contacts the 23S rRNA (bridge B1a) and protein L5 of the 50S subunit (bridge B1b), connecting the 2 subunits; these bridges are implicated in subunit movement. Contacts the tRNAs in the A and P-sites. This is Small ribosomal subunit protein uS13 from Campylobacter curvus (strain 525.92).